A 256-amino-acid chain; its full sequence is MDTYSVFTTKWKQLTGVDLTLYKEAQMKRRLTSLYEKKGFQSFKDFAAALEKDQALLNETLDRMTINVSEFYRNYKRWEVLETAILPLIKTSRPLKIWSAACSTGEEPYTLAMLLDQQKGLPGYQILATDIDEKALEKAKKGVYQERSLQEVPLSVKDRYFTQNANRSYEVKTEIKKNITFKKHNLLADRYEQDFDLIVCRNVFIYFTESAKEELYLKMAHSLKKNGVLFVGSTEQIFNPEKFGLVPADTFFYQKR.

One can recognise a CheR-type methyltransferase domain in the interval 1 to 256 (MDTYSVFTTK…PADTFFYQKR (256 aa)). Residues Asn67, Ser69, Arg73, Glu107, Asp130, 185 to 186 (NL), and 201 to 202 (RN) each bind S-adenosyl-L-methionine.

Monomer.

It carries out the reaction L-glutamyl-[protein] + S-adenosyl-L-methionine = [protein]-L-glutamate 5-O-methyl ester + S-adenosyl-L-homocysteine. Functionally, methylation of the membrane-bound methyl-accepting chemotaxis proteins (MCP) to form gamma-glutamyl methyl ester residues in MCP. CheR is responsible for the chemotactic adaptation to repellents. In Bacillus subtilis (strain 168), this protein is Chemotaxis protein methyltransferase (cheR).